The following is an 823-amino-acid chain: Mitochondrial intermediate peptidase 2 (823 aa).

Residues 1 to 33 (MRRLQQSLRRRSARRCPFILIPHRLLTTSYASY) constitute a mitochondrion transit peptide. Residues 532–553 (IDGDGLPEDWDKPYGPGLEADK) form a disordered region. Residue histidine 595 participates in Zn(2+) binding. Residue glutamate 596 is part of the active site. Positions 599 and 602 each coordinate Zn(2+).

It belongs to the peptidase M3 family. Requires Zn(2+) as cofactor.

Its subcellular location is the mitochondrion matrix. The enzyme catalyses Release of an N-terminal octapeptide as second stage of processing of some proteins imported into the mitochondrion.. Cleaves proteins, imported into the mitochondrion, to their mature size. While most mitochondrial precursor proteins are processed to the mature form in one step by mitochondrial processing peptidase (MPP), the sequential cleavage by MIP of an octapeptide after initial processing by MPP is a required step for a subgroup of nuclear-encoded precursor proteins destined for the matrix or the inner membrane. The sequence is that of Mitochondrial intermediate peptidase 2 (OCT2) from Cryptococcus neoformans var. neoformans serotype D (strain B-3501A) (Filobasidiella neoformans).